The sequence spans 403 residues: Serine/threonine-protein phosphatase 4 regulatory subunit 2-A (403 aa).

3 stretches are compositionally biased toward polar residues: residues 140-149, 156-170, and 183-196; these read EKNNSTSLNR, PSNSQSYTDRSNVNG, and SLSSPMNTNGLPDS. The disordered stretch occupies residues 140 to 403; the sequence is EKNNSTSLNR…DAPEEPMEQD (264 aa). Basic and acidic residues predominate over residues 197-211; it reads TENKESDLQQKEKSQ. Composition is skewed to polar residues over residues 212-226 and 371-387; these read SDSAVSDDGSQATTS and ATSSGKSTETLTLSPME. Positions 388–403 are enriched in acidic residues; sequence NSEEATDAPEEPMEQD.

This sequence belongs to the PPP4R2 family. Serine/threonine-protein phosphatase 4 (PP4) occurs in different assemblies of the catalytic and one or more regulatory subunits.

Its function is as follows. Regulatory subunit of serine/threonine-protein phosphatase 4 (PP4). This is Serine/threonine-protein phosphatase 4 regulatory subunit 2-A (ppp4r2-a) from Xenopus laevis (African clawed frog).